The chain runs to 389 residues: S-adenosylmethionine synthase (389 aa).

His17 is a binding site for ATP. Asp19 provides a ligand contact to Mg(2+). Residue Glu45 coordinates K(+). The L-methionine site is built by Glu58 and Gln102. The segment at 102–112 is flexible loop; the sequence is QSADIAQGVDA. ATP contacts are provided by residues 167–169, Asp241, 247–248, Ala264, and Lys268; these read DAK and RK. Asp241 is a binding site for L-methionine. Lys272 contributes to the L-methionine binding site.

This sequence belongs to the AdoMet synthase family. In terms of assembly, homotetramer; dimer of dimers. Requires Mg(2+) as cofactor. It depends on K(+) as a cofactor.

It localises to the cytoplasm. It catalyses the reaction L-methionine + ATP + H2O = S-adenosyl-L-methionine + phosphate + diphosphate. It participates in amino-acid biosynthesis; S-adenosyl-L-methionine biosynthesis; S-adenosyl-L-methionine from L-methionine: step 1/1. In terms of biological role, catalyzes the formation of S-adenosylmethionine (AdoMet) from methionine and ATP. The overall synthetic reaction is composed of two sequential steps, AdoMet formation and the subsequent tripolyphosphate hydrolysis which occurs prior to release of AdoMet from the enzyme. The protein is S-adenosylmethionine synthase of Parvibaculum lavamentivorans (strain DS-1 / DSM 13023 / NCIMB 13966).